We begin with the raw amino-acid sequence, 421 residues long: Imidazolonepropionase (421 aa).

Histidine 81 and histidine 83 together coordinate Fe(3+). Zn(2+)-binding residues include histidine 81 and histidine 83. 4-imidazolone-5-propanoate contacts are provided by arginine 90, tyrosine 153, and histidine 186. Tyrosine 153 contributes to the N-formimidoyl-L-glutamate binding site. Histidine 251 serves as a coordination point for Fe(3+). Histidine 251 lines the Zn(2+) pocket. 4-imidazolone-5-propanoate is bound at residue glutamate 254. Aspartate 326 provides a ligand contact to Fe(3+). Position 326 (aspartate 326) interacts with Zn(2+). The N-formimidoyl-L-glutamate site is built by asparagine 328 and glycine 330. Serine 331 contributes to the 4-imidazolone-5-propanoate binding site.

It belongs to the metallo-dependent hydrolases superfamily. HutI family. Zn(2+) serves as cofactor. It depends on Fe(3+) as a cofactor.

It localises to the cytoplasm. It catalyses the reaction 4-imidazolone-5-propanoate + H2O = N-formimidoyl-L-glutamate. It functions in the pathway amino-acid degradation; L-histidine degradation into L-glutamate; N-formimidoyl-L-glutamate from L-histidine: step 3/3. Functionally, catalyzes the hydrolytic cleavage of the carbon-nitrogen bond in imidazolone-5-propanoate to yield N-formimidoyl-L-glutamate. It is the third step in the universal histidine degradation pathway. The chain is Imidazolonepropionase from Streptococcus pyogenes serotype M3 (strain SSI-1).